A 273-amino-acid polypeptide reads, in one-letter code: Protein B4 (273 aa).

The interval 1–24 is disordered; sequence MAPKKAVAAPEGGNKENAAVKGSS. An H15 domain is found at 40 to 118; it reads SHPPTLSMVV…GATGRFKLAK (79 aa). The interval 120-273 is disordered; the sequence is VKTTKAGKEN…AGKKGKKVTN (154 aa). Positions 154-256 are enriched in basic and acidic residues; sequence AKTEKEPKGE…KDVKAQKDST (103 aa). 3 tandem repeats follow at residues 189–198, 199–208, and 209–217. The tract at residues 189–217 is 3 X 10 AA tandem repeats; it reads KEAKEVDKANKEAKEVDKANKEAKEVDKA. The span at 264–273 shows a compositional bias: basic residues; it reads AGKKGKKVTN.

This sequence belongs to the histone H1/H5 family. Interacts with nap1l1.

Its subcellular location is the nucleus. The protein resides in the chromosome. The polypeptide is Protein B4 (b4) (Xenopus laevis (African clawed frog)).